The chain runs to 418 residues: Arginine deiminase (418 aa).

Cys-406 acts as the Amidino-cysteine intermediate in catalysis.

This sequence belongs to the arginine deiminase family.

Its subcellular location is the cytoplasm. It carries out the reaction L-arginine + H2O = L-citrulline + NH4(+). The protein operates within amino-acid degradation; L-arginine degradation via ADI pathway; carbamoyl phosphate from L-arginine: step 1/2. The sequence is that of Arginine deiminase from Lentilactobacillus hilgardii (Lactobacillus hilgardii).